We begin with the raw amino-acid sequence, 201 residues long: Pyrrolidone-carboxylate peptidase (201 aa).

Active-site residues include Glu78, Cys141, and His165.

It belongs to the peptidase C15 family. As to quaternary structure, homotetramer.

The protein resides in the cytoplasm. It catalyses the reaction Release of an N-terminal pyroglutamyl group from a polypeptide, the second amino acid generally not being Pro.. Functionally, removes 5-oxoproline from various penultimate amino acid residues except L-proline. The chain is Pyrrolidone-carboxylate peptidase from Brachyspira hyodysenteriae (strain ATCC 49526 / WA1).